An 815-amino-acid polypeptide reads, in one-letter code: RNA-binding protein 5 (815 aa).

The tract at residues 1-93 (MGSDKRVSRT…EHDYRHDISD (93 aa)) is disordered. Phosphoserine occurs at positions 18, 59, 69, 72, and 78. Residues 98–178 (KTIMLRGLPI…KHIAMHYSNP (81 aa)) form the RRM 1 domain. A RanBP2-type zinc finger spans residues 181–210 (KFEDWLCNKCCLNNFRKRLKCFRCGADKFD). Residues 231–315 (DTIILRNIAP…KTIGVDFAKS (85 aa)) enclose the RRM 2 domain. Residues 321–809 (VLSDGNRVSA…KDAVRKAMFA (489 aa)) form a required for interaction with U2AF2 region. A compositionally biased stretch (polar residues) spans 411 to 422 (QSPQLYNQTSNP). 2 disordered regions span residues 411-468 (QSPQ…DESS) and 507-540 (PAAESSSHQQSGLPPAKEGKEKKEKPKSKTAQQI). Over residues 426 to 446 (PTEEAQPSTSTSTQAPAASPT) the composition is skewed to low complexity. Ser444 is modified (phosphoserine). Residues 452–535 (TKYAVPDTST…KEKKEKPKSK (84 aa)) form a sufficient for interaction with ACIN1, PRPF8, SFRS3, SNRPB, SNRPN, SNRNP70 and SNRNP200 region. Phosphoserine is present on residues Ser621 and Ser624. The segment at 647–677 (MACLLCRRQFPNKDALVRHQQLSDLHKQNMD) adopts a C2H2-type; atypical zinc-finger fold. The G-patch domain maps to 743–789 (HSNIGNKMLQAMGWREGSGLGRKCQGITAPIEAQVRLKGAGLGAKGS).

It belongs to the RBM5/RBM10 family. Component of the spliceosome A complex (also known as the prespliceosome). Appears to dissociate from the spliceosome upon formation of the spliceosome B complex (also known as the precatalytic spliceosome), in which the heterotrimeric U4/U6.U5 snRNPs are bound. Interacts with U2AF2; this interaction is direct. Also interacts with ACIN1, PRPF8, SFRS3, SNRPB, SNRPN, SNRNP70 and SNRNP200; these interactions may be indirect. In terms of tissue distribution, isoform 5 is widely expressed in normal tissues and is expressed at increased levels in T-leukemic cell lines.

It is found in the nucleus. Its function is as follows. Component of the spliceosome A complex. Binds to ssRNA containing the consensus sequence 5'-AGGUAA-3'. Regulates alternative splicing of a number of mRNAs. May modulate splice site pairing after recruitment of the U1 and U2 snRNPs to the 5' and 3' splice sites of the intron. May both positively and negatively regulate apoptosis by regulating the alternative splicing of several genes involved in this process, including FAS and CASP2/caspase-2. In the case of FAS, promotes exclusion of exon 6 thereby producing a soluble form of FAS that inhibits apoptosis. In the case of CASP2/caspase-2, promotes exclusion of exon 9 thereby producing a catalytically active form of CASP2/Caspase-2 that induces apoptosis. The sequence is that of RNA-binding protein 5 (RBM5) from Homo sapiens (Human).